The primary structure comprises 200 residues: Peptidyl-tRNA hydrolase (200 aa).

A tRNA-binding site is contributed by Y17. Catalysis depends on H22, which acts as the Proton acceptor. The tRNA site is built by Y78, N80, and N126.

The protein belongs to the PTH family. In terms of assembly, monomer.

The protein resides in the cytoplasm. The enzyme catalyses an N-acyl-L-alpha-aminoacyl-tRNA + H2O = an N-acyl-L-amino acid + a tRNA + H(+). In terms of biological role, hydrolyzes ribosome-free peptidyl-tRNAs (with 1 or more amino acids incorporated), which drop off the ribosome during protein synthesis, or as a result of ribosome stalling. Catalyzes the release of premature peptidyl moieties from peptidyl-tRNA molecules trapped in stalled 50S ribosomal subunits, and thus maintains levels of free tRNAs and 50S ribosomes. The chain is Peptidyl-tRNA hydrolase from Cutibacterium acnes (strain DSM 16379 / KPA171202) (Propionibacterium acnes).